A 162-amino-acid polypeptide reads, in one-letter code: Caveolin-2 (162 aa).

Over M1–K86 the chain is Cytoplasmic. Y19 carries the phosphotyrosine; by SRC modification. A Phosphoserine modification is found at S20. Y27 carries the phosphotyrosine; by SRC modification. S36 is modified (phosphoserine). The segment at residues F87–L107 is an intramembrane region (helical). Over S108 to D162 the chain is Cytoplasmic.

This sequence belongs to the caveolin family. Monomer or homodimer. Interacts with CAV1; the interaction forms a stable heterooligomeric complex that is required for targeting to lipid rafts and for caveolae formation. Tyrosine phosphorylated forms do not form heterooligomers with the Tyr-19-phosphorylated form existing as a monomer or dimer, and the Tyr-27-form as a monomer only. Interacts (tyrosine phosphorylated form) with the SH2 domain-containing proteins, RASA1, NCK1 and SRC. Interacts (tyrosine phosphorylated form) with INSR, the interaction (Tyr-27-phosphorylated form) is increased on insulin stimulation. Interacts (Tyr-19 phosphorylated form) with MAPK1 (phosphorylated form); the interaction, promoted by insulin, leads to nuclear location and MAPK1 activation. Interacts with STAT3; the interaction is increased on insulin-induced tyrosine phosphorylation leading to STAT activation. Post-translationally, phosphorylated on serine and tyrosine residues. Phosphorylation on Ser-36 appears to modulate mitosis in endothelial cells. Phosphorylation on both Tyr-19 and Tyr-27 is required for insulin-induced 'Ser-727' phosphorylation of STAT3 and its activation. Phosphorylation on Tyr-19 is required for insulin-induced phosphorylation of MAPK1 and DNA binding of STAT3. Tyrosine phosphorylation is induced by both EGF and insulin.

It localises to the nucleus. Its subcellular location is the cytoplasm. The protein localises to the golgi apparatus membrane. The protein resides in the cell membrane. It is found in the membrane. It localises to the caveola. Functionally, may act as a scaffolding protein within caveolar membranes. Interacts directly with G-protein alpha subunits and can functionally regulate their activity. Acts as an accessory protein in conjunction with CAV1 in targeting to lipid rafts and driving caveolae formation. The Ser-36 phosphorylated form has a role in modulating mitosis in endothelial cells. Positive regulator of cellular mitogenesis of the MAPK signaling pathway. Required for the insulin-stimulated nuclear translocation and activation of MAPK1 and STAT3, and the subsequent regulation of cell cycle progression. The protein is Caveolin-2 (CAV2) of Eulemur macaco macaco (Black lemur).